The sequence spans 130 residues: DUF35 domain-containing scaffold protein (130 aa).

Zn(2+)-binding residues include C20, C23, C34, and C37.

It belongs to the scaffold protein DUF35 family. Interacts with acetoacetyl-CoA thiolase and HMG-CoA synthase (HMGCS) that catalyzes the first and second step in the mevalonate pathway, respectively.

In terms of biological role, functions as a scaffold to connect the acetoacetyl-CoA thiolase and HMG-CoA synthase (HMGCS) dimers in the channeling thiolase/HMGCS complex, which allows for efficient coupling of the endergonic thiolase reaction with the exergonic HMGCS reaction. The protein is DUF35 domain-containing scaffold protein of Methanothermococcus thermolithotrophicus (Methanococcus thermolithotrophicus).